The sequence spans 318 residues: Protein FAM228A (318 aa).

The interval 259 to 297 (SQESKRHEKKGLALGTGQHRPRSWAAGEGQQRRRSQPVD) is disordered.

It belongs to the FAM228 family.

The polypeptide is Protein FAM228A (FAM228A) (Bos taurus (Bovine)).